The primary structure comprises 108 residues: DNA-binding protein HBbu (108 aa).

This sequence belongs to the bacterial histone-like protein family.

Functionally, histone-like DNA-binding protein which is capable of wrapping DNA to stabilize it, and thus to prevent its denaturation under extreme environmental conditions. This chain is DNA-binding protein HBbu (hbb), found in Borreliella afzelii (Borrelia afzelii).